Reading from the N-terminus, the 356-residue chain is Heme A synthase (356 aa).

5 helical membrane-spanning segments follow: residues 24-44 (IAIW…VGGV), 106-126 (FHRL…VYFM), 139-159 (LLGI…MVMS), 174-194 (AHLG…TGLI), and 214-234 (AWML…VAGI). Histidine 276 is a heme binding site. 3 helical membrane-spanning segments follow: residues 278 to 298 (LIAW…KQLS), 309 to 329 (LLLL…LLSV), and 331 to 351 (LTFA…ALWV). Histidine 337 provides a ligand contact to heme.

The protein belongs to the COX15/CtaA family. Type 2 subfamily. As to quaternary structure, interacts with CtaB. Requires heme b as cofactor.

It is found in the cell membrane. The enzyme catalyses Fe(II)-heme o + 2 A + H2O = Fe(II)-heme a + 2 AH2. The protein operates within porphyrin-containing compound metabolism; heme A biosynthesis; heme A from heme O: step 1/1. Its function is as follows. Catalyzes the conversion of heme O to heme A by two successive hydroxylations of the methyl group at C8. The first hydroxylation forms heme I, the second hydroxylation results in an unstable dihydroxymethyl group, which spontaneously dehydrates, resulting in the formyl group of heme A. The chain is Heme A synthase from Nitrosomonas eutropha (strain DSM 101675 / C91 / Nm57).